Here is a 329-residue protein sequence, read N- to C-terminus: Replication factor C small subunit 1 (329 aa).

Position 44-51 (44-51 (GPPGTGKT)) interacts with ATP.

It belongs to the activator 1 small subunits family. RfcS subfamily. As to quaternary structure, heteromultimer composed of small subunits (RfcS) and large subunits (RfcL).

In terms of biological role, part of the RFC clamp loader complex which loads the PCNA sliding clamp onto DNA. In Pyrobaculum aerophilum (strain ATCC 51768 / DSM 7523 / JCM 9630 / CIP 104966 / NBRC 100827 / IM2), this protein is Replication factor C small subunit 1.